Reading from the N-terminus, the 164-residue chain is Phosphopantetheine adenylyltransferase (164 aa).

Ser-9 serves as a coordination point for substrate. Residues 9–10 (SF) and His-17 contribute to the ATP site. Residues Lys-41, Leu-73, and Lys-87 each coordinate substrate. Residues 88-90 (GLR), Glu-98, and 122-128 (YSYLSSS) contribute to the ATP site.

Belongs to the bacterial CoaD family. As to quaternary structure, homohexamer. It depends on Mg(2+) as a cofactor.

Its subcellular location is the cytoplasm. The enzyme catalyses (R)-4'-phosphopantetheine + ATP + H(+) = 3'-dephospho-CoA + diphosphate. The protein operates within cofactor biosynthesis; coenzyme A biosynthesis; CoA from (R)-pantothenate: step 4/5. In terms of biological role, reversibly transfers an adenylyl group from ATP to 4'-phosphopantetheine, yielding dephospho-CoA (dPCoA) and pyrophosphate. This Rhodococcus jostii (strain RHA1) protein is Phosphopantetheine adenylyltransferase.